The primary structure comprises 61 residues: [Thr6]-bradykinyl-Val,Asp (61 aa).

The N-terminal stretch at 1–22 is a signal peptide; it reads MSFLKKSLFLVLFLGLVSFSIC. A propeptide spanning residues 23–50 is cleaved from the precursor; that stretch reads EEEKRETEEEENEDEMDKESEEKRESPE. The tract at residues 24–61 is disordered; sequence EEKRETEEEENEDEMDKESEEKRESPERPPGFTPFRVD. Acidic residues predominate over residues 30–41; it reads EEEENEDEMDKE. The residue at position 53 (P53) is a 4-hydroxyproline; in form [Hyp3,Thr6]-bradykinyl-Val,Asp and [Hyp3,Thr6]-bradykinin.

Belongs to the frog skin active peptide (FSAP) family. Bradykinin-related peptide subfamily. In terms of tissue distribution, expressed by the skin glands.

It localises to the secreted. Induces relaxation of rat smooth muscle from tail artery (EC(50)=16.8 nM) and contraction of that from ileum (EC(50)=205 nM), urinary bladder (EC(50)=895 nM) and uterus (EC(50)=60.3 nM). Binds to both bradykinin receptor B1 (BDKRB1) and B2 (BDKRB2). In terms of biological role, [Hyp3,Thr6]-bradykinin: Induces relaxation of rat smooth muscle from tail artery (EC(50)=56.7 nM) and contraction of that from ileum (EC(50)=588 nM), urinary bladder (EC(50)=4.6 uM) and uterus (EC(50)=3.9 nM). Binds to both bradykinin receptor B1 (BDKRB1) and B2 (BDKRB2). In arterial smooth muscle, the effect via BDKRB1 is stronger, in uterus, ileum and urinary bladder that via BDKRB2. Its function is as follows. Induces relaxation of rat smooth muscle from tail artery (EC(50)=10.8 nM) and contraction of that from ileum (EC(50)=645 nM), urinary bladder (EC(50)=1.1 uM) and uterus (EC(50)=1.2 uM). Binds to both bradykinin receptor B1 (BDKRB1) and B2 (BDKRB2). Apart from uterus smooth muscle, the effect via B2 is stronger. Functionally, [Hyp3,Thr6]-bradykinyl-Val,Asp: Induces relaxation of rat smooth muscle from tail artery (EC(50)=3.5 nM) and contraction of that from ileum (EC(50)=223 nM), urinary bladder (EC(50)=1.5 uM) and uterus (EC(50)=356 nM). Binds to both bradykinin receptor B1 (BDKRB1) and B2 (BDKRB2); the effects via B2 a stronger. The chain is [Thr6]-bradykinyl-Val,Asp from Agalychnis callidryas (Red-eyed tree frog).